Reading from the N-terminus, the 290-residue chain is MVVLHVKRGDESQFLLQAPGSTELEELTAQVARVYNGRLKVHRLCSEMEELAEHGVFLPPNMQGLTDEQIEELKLKDEWGEKCVPSGGSVFTKDEIGRRNGQAPNEKMKQVLKKTVEEAKAIVSKKQVEAGVFVTMEMVKDALDQLRGAVMIVYPMGLPPYDPIRMEFENKEDLSGTQAALEVIQESEAQLWWAAKELRRTKKLSDYVGKNEKTKIIVKIQQRGQGAPAREPVISSEEHKQLMLFYHRRQEELKKLEENDDDSCLNSPWADNTALKRHFHGVKDIKWRPR.

It belongs to the CFAP298 family. Interacts with ZMYND10.

It localises to the cytoplasm. The protein localises to the cytoskeleton. It is found in the cilium basal body. In terms of biological role, plays a role in motile cilium function, possibly by acting on outer dynein arm assembly. Seems to be important for initiation rather than maintenance of cilium motility. Required for correct positioning of cilia at the apical cell surface, suggesting an additional role in the planar cell polarity (PCP) pathway. May suppress canonical Wnt signaling activity. The protein is Cilia- and flagella-associated protein 298 of Mus musculus (Mouse).